The chain runs to 306 residues: Aspartate carbamoyltransferase catalytic subunit (306 aa).

Carbamoyl phosphate is bound by residues arginine 53 and threonine 54. Lysine 82 is a binding site for L-aspartate. Arginine 103, histidine 131, and glutamine 134 together coordinate carbamoyl phosphate. The L-aspartate site is built by arginine 164 and arginine 226. Carbamoyl phosphate is bound by residues leucine 263 and proline 264.

The protein belongs to the aspartate/ornithine carbamoyltransferase superfamily. ATCase family. Heterododecamer (2C3:3R2) of six catalytic PyrB chains organized as two trimers (C3), and six regulatory PyrI chains organized as three dimers (R2).

The enzyme catalyses carbamoyl phosphate + L-aspartate = N-carbamoyl-L-aspartate + phosphate + H(+). Its pathway is pyrimidine metabolism; UMP biosynthesis via de novo pathway; (S)-dihydroorotate from bicarbonate: step 2/3. In terms of biological role, catalyzes the condensation of carbamoyl phosphate and aspartate to form carbamoyl aspartate and inorganic phosphate, the committed step in the de novo pyrimidine nucleotide biosynthesis pathway. This Methanocaldococcus jannaschii (strain ATCC 43067 / DSM 2661 / JAL-1 / JCM 10045 / NBRC 100440) (Methanococcus jannaschii) protein is Aspartate carbamoyltransferase catalytic subunit.